The sequence spans 253 residues: UPF0280 protein MA_1715 (253 aa).

This sequence belongs to the UPF0280 family.

The protein is UPF0280 protein MA_1715 of Methanosarcina acetivorans (strain ATCC 35395 / DSM 2834 / JCM 12185 / C2A).